We begin with the raw amino-acid sequence, 220 residues long: MSKDSAFAVQYSLRALGQKVRADGVVGSETRAALDALPENQKKAIVELQALLPKAQSVGNNRVRFTTAEVDSAVARISQKIGVPASYYQFLIPIENFVVAGGFETTVSGSFRGLGQFNRQTWDRLRRLGRNLPAFEEGSAQLNASLYAIGFLYLENKRAYEASFKGRVFTHEIAYLYHNQGAPAAEQYLTSGRLVYPKQSEAAVAAVAAARNQHVKESWA.

Belongs to the peptidase U40 family. In terms of assembly, monomer.

It localises to the virion. Muralytic enzyme exposed to host peptidoglycan layer after membrane fusion during viral entry. Functions as an exolysin that cleaves the peptide bridge formed by meso-diaminopimelic acid and D-alanine. Also lyses the host cell late in infection to release the virions. This chain is Peptidoglycan hydrolase gp5 (P5), found in Pseudomonas savastanoi pv. phaseolicola (Pseudomonas syringae pv. phaseolicola).